A 324-amino-acid polypeptide reads, in one-letter code: Holliday junction branch migration complex subunit RuvB (324 aa).

The large ATPase domain (RuvB-L) stretch occupies residues 1 to 168; sequence MEDLALRPKT…FGIVEHLEYY (168 aa). ATP is bound by residues Leu-6, Arg-7, Gly-48, Lys-51, Thr-52, Thr-53, 115–117, Arg-158, Tyr-168, and Arg-205; that span reads EDF. Thr-52 provides a ligand contact to Mg(2+). A small ATPAse domain (RuvB-S) region spans residues 169–239; it reads TPEELAQGVM…RALEALAALG (71 aa). The tract at residues 242–324 is head domain (RuvB-H); sequence ELGLEKRDRE…PPPVGPLLEP (83 aa). The DNA site is built by Arg-297 and Arg-302.

This sequence belongs to the RuvB family. As to quaternary structure, homohexamer. Forms an RuvA(8)-RuvB(12)-Holliday junction (HJ) complex. HJ DNA is sandwiched between 2 RuvA tetramers; dsDNA enters through RuvA and exits via RuvB. An RuvB hexamer assembles on each DNA strand where it exits the tetramer. Each RuvB hexamer is contacted by two RuvA subunits (via domain III) on 2 adjacent RuvB subunits; this complex drives branch migration. In the full resolvosome a probable DNA-RuvA(4)-RuvB(12)-RuvC(2) complex forms which resolves the HJ.

It is found in the cytoplasm. The enzyme catalyses ATP + H2O = ADP + phosphate + H(+). The ATPase activity of RuvB is enhanced by RuvA. Functionally, the RuvA-RuvB-RuvC complex processes Holliday junction (HJ) DNA during genetic recombination and DNA repair, while the RuvA-RuvB complex plays an important role in the rescue of blocked DNA replication forks via replication fork reversal (RFR). RuvA specifically binds to HJ cruciform DNA, conferring on it an open structure. The RuvB hexamer acts as an ATP-dependent pump, pulling dsDNA into and through the RuvAB complex. RuvB forms 2 homohexamers on either side of HJ DNA bound by 1 or 2 RuvA tetramers; 4 subunits per hexamer contact DNA at a time. Coordinated motions by a converter formed by DNA-disengaged RuvB subunits stimulates ATP hydrolysis and nucleotide exchange. Immobilization of the converter enables RuvB to convert the ATP-contained energy into a lever motion, pulling 2 nucleotides of DNA out of the RuvA tetramer per ATP hydrolyzed, thus driving DNA branch migration. The RuvB motors rotate together with the DNA substrate, which together with the progressing nucleotide cycle form the mechanistic basis for DNA recombination by continuous HJ branch migration. Branch migration allows RuvC to scan DNA until it finds its consensus sequence, where it cleaves and resolves cruciform DNA. Its function is as follows. Has Mg(2+)-, DNA-dependent ATPase activity; dsDNA and supercoiled DNA but not ssDNA stimulate activity. Binds to linear dsDNA in the absence of ATP or ATP-gamma-S. This subunit can promote Holliday junction migration alone in vitro. Partially complements an E.coli deletion for UV sensitivity. This is Holliday junction branch migration complex subunit RuvB from Thermus thermophilus.